The following is a 509-amino-acid chain: Maturase K (509 aa).

Belongs to the intron maturase 2 family. MatK subfamily.

The protein localises to the plastid. The protein resides in the chloroplast. In terms of biological role, usually encoded in the trnK tRNA gene intron. Probably assists in splicing its own and other chloroplast group II introns. This is Maturase K from Opuntia quimilo (Cactus).